The following is a 188-amino-acid chain: Elongation factor P (188 aa).

It belongs to the elongation factor P family.

The protein resides in the cytoplasm. The protein operates within protein biosynthesis; polypeptide chain elongation. Functionally, involved in peptide bond synthesis. Stimulates efficient translation and peptide-bond synthesis on native or reconstituted 70S ribosomes in vitro. Probably functions indirectly by altering the affinity of the ribosome for aminoacyl-tRNA, thus increasing their reactivity as acceptors for peptidyl transferase. This chain is Elongation factor P, found in Leptospira interrogans serogroup Icterohaemorrhagiae serovar copenhageni (strain Fiocruz L1-130).